The primary structure comprises 892 residues: Alpha-actinin-1 (892 aa).

An N-acetylmethionine modification is found at M1. Residues 1–247 (MDHYDSQQTN…IMTYVSSFYH (247 aa)) are actin-binding. Position 6 is a phosphoserine (S6). Y12 carries the post-translational modification Phosphotyrosine; by FAK1. 2 consecutive Calponin-homology (CH) domains span residues 31–135 (KQQR…LRFA) and 144–250 (TSAK…HAFS). K95 and K195 each carry N6-acetyllysine. 4 Spectrin repeats span residues 274 to 384 (QLME…WLLN), 394 to 499 (HLAE…ALER), 509 to 620 (QLYL…ALTE), and 630 to 733 (RLRK…EVEN). The interaction with DDN stretch occupies residues 274–733 (QLMEDYEKLA…IARTINEVEN (460 aa)). S471 carries the phosphoserine modification. Position 676 is an N6-acetyllysine (K676). S677 carries the phosphoserine modification. EF-hand domains are found at residues 746–781 (EQMNEFRASFNHFDRDHSGTLGPEEFKACLISLGYD) and 787–822 (QGEAEFARIMSIVDPNRLGVVTFQAFIDFMSRETAD). Positions 759, 761, 763, 765, and 770 each coordinate Ca(2+). S890 bears the Phosphoserine mark.

Belongs to the alpha-actinin family. In terms of assembly, homodimer; antiparallel. Interacts with MYOZ2, TTID and LPP. Interacts with DDN. Interacts with PSD. Interacts with MICALL2. Interacts with DNM2 and CTTN. Interacts with PDLIM1. Interacts with PDLIM2. Interacts with PDLIM4 (via PDZ domain). Interacts with IGSF8.

It localises to the cytoplasm. The protein resides in the cytoskeleton. It is found in the myofibril. The protein localises to the sarcomere. Its subcellular location is the z line. It localises to the cell membrane. The protein resides in the cell junction. It is found in the cell projection. The protein localises to the ruffle. Its function is as follows. F-actin cross-linking protein which is thought to anchor actin to a variety of intracellular structures. Association with IGSF8 regulates the immune synapse formation and is required for efficient T-cell activation. This Mus musculus (Mouse) protein is Alpha-actinin-1 (Actn1).